Consider the following 1050-residue polypeptide: MSAASESKYSTEVLSELLSKLQVADNKDEAASNISTFLNSSIVEHDVPVEFFEDLKKQIQSKDAKVSLAALDAYKHIASTNGLSPSVEPYVVDLVSEVAVKAGDKNKDVQTAASDALLAIASAITPTAVKAILPKLIDNLTNTNKWTEKVAILRAVSQLVDTAKAQIALRMPELIPVLSESMWDTKKEVKEAATATMTKSTETIDNKDIEKFIPQLISCIAKPTEVPETVHLLGATTFVSEVTMATLSIMAPLLSRGLAERDTAIKRKAAVIVDNMCKLVEDPQIVAPFMDKLLPGLKNNFANMADPEAREVTQRALNTLRRVGAVGENDSIPEVSTAGDIDVTLNEFNKLVADKKIAKRFDVALNYIAAIAGDLVDEREIQPEAWLQNVLPFATIFLHEKEAKEIIEEFRKRAIDNIPQPPSFEDEEDEGEDLCNCEFSLAYGAKILLNKTQFRLKRNRRYGLCGPNGAGKSTLMRAIANGQVEGFPTQDECKTVYVEHDIDGTHADTTVVEFVIEDGEVGLTKDVVVDKLREFNFSDEMINMPIQSLSGGWKMKLALARAVLKNADILLLDEPTNHLDTVNVAWLVNYLNTCGITSIIVSHDSGFLDNVTQYIIHYEGFKLRKYKGNLSEFVKKCPSAQSYYELGASDLEFRFPEPGFLEGVKTKQKAIVKVSNMSFQYPGTSKPQIQDINFQCSLSSRIAVIGPNGAGKSTLINVLTGELLPTTGEVYVHENCRIAYIKQHAFAHIDNHLDKTPSEYIQWRFQTGEDRETMDRASRQINEEDEQNMNKIFKIEGTPRRIAGIHARRKFKNSYEYEISWMLGENIGMKNERWVPMMSVDNTWLPRGELMETHAKLVAEVDMKEALASGQFRPLTRKEIEEHCAMLGLDAELVSHSRIRGLSGGQKVKLVLAACTWQRPHLIVLDEPTNYLDRDSLGALSKALKAFEGGIVIITHSAEFTKDLTEEVWAVLDGRMTPSGHNWVQGQGSGPRIEKKDDEEEDKFDAMGNKIAAAKKKKKLSSAELRKKKKERMKKKKELGDAYVSSDEEF.

Valine 43 and histidine 45 together coordinate ADP. One copy of the HEAT 1 repeat lies at 46-83; the sequence is DVPVEFFEDLKKQIQSKDAKVSLAALDAYKHIASTNGL. Residue serine 86 coordinates ADP. 6 HEAT repeats span residues 89 to 126, 127 to 165, 169 to 206, 208 to 244, 245 to 282, and 288 to 326; these read PYVV…AITP, TAVK…TAKA, LRMP…TIDN, DIEK…EVTM, ATLS…LVED, and PFMD…VGAV. ADP is bound by residues threonine 395, histidine 399, and glutamate 400. ABC transporter domains follow at residues 429–646 and 672–998; these read DEGE…YYEL and VKVS…KKDD. ADP is bound by residues asparagine 708, glutamate 927, asparagine 930, and histidine 956. A disordered region spans residues 980-1050; that stretch reads GHNWVQGQGS…DAYVSSDEEF (71 aa). The segment covering 1013-1037 has biased composition (basic residues); sequence AAKKKKKLSSAELRKKKKERMKKKK.

The protein belongs to the ABC transporter superfamily. ABCF family. EF3 subfamily. Monomer.

The protein resides in the cytoplasm. It carries out the reaction ATP + H2O = ADP + phosphate + H(+). It functions in the pathway protein biosynthesis; polypeptide chain elongation. Its function is as follows. Ribosome-dependent ATPase that functions in cytoplasmic translation elongation. Required for the ATP-dependent release of deacylated tRNA from the ribosomal E-site during protein biosynthesis. Stimulates the eEF1A-dependent binding of aminoacyl-tRNA to the ribosomal A-site, which has reduced affinity for tRNA as long as the E-site is occupied. Assists translation termination by stimulating the release of nascent protein from the ribosome by release factors. The chain is Elongation factor 3 (CEF3) from Candida albicans (strain SC5314 / ATCC MYA-2876) (Yeast).